The following is a 343-amino-acid chain: Probable dual-specificity RNA methyltransferase RlmN (343 aa).

Catalysis depends on Glu-91, which acts as the Proton acceptor. One can recognise a Radical SAM core domain in the interval 97 to 327; the sequence is YKHGNSICVS…TTIRREMGSD (231 aa). A disulfide bridge connects residues Cys-104 and Cys-332. Positions 111, 115, and 118 each coordinate [4Fe-4S] cluster. Residues 158 to 159, Ser-190, 213 to 215, and Asn-289 each bind S-adenosyl-L-methionine; these read GE and SLH. The active-site S-methylcysteine intermediate is Cys-332.

The protein belongs to the radical SAM superfamily. RlmN family. [4Fe-4S] cluster serves as cofactor.

It is found in the cytoplasm. The catalysed reaction is adenosine(2503) in 23S rRNA + 2 reduced [2Fe-2S]-[ferredoxin] + 2 S-adenosyl-L-methionine = 2-methyladenosine(2503) in 23S rRNA + 5'-deoxyadenosine + L-methionine + 2 oxidized [2Fe-2S]-[ferredoxin] + S-adenosyl-L-homocysteine. The enzyme catalyses adenosine(37) in tRNA + 2 reduced [2Fe-2S]-[ferredoxin] + 2 S-adenosyl-L-methionine = 2-methyladenosine(37) in tRNA + 5'-deoxyadenosine + L-methionine + 2 oxidized [2Fe-2S]-[ferredoxin] + S-adenosyl-L-homocysteine. Functionally, specifically methylates position 2 of adenine 2503 in 23S rRNA and position 2 of adenine 37 in tRNAs. This is Probable dual-specificity RNA methyltransferase RlmN from Clostridium novyi (strain NT).